A 227-amino-acid chain; its full sequence is MAYPFQLGLQDATSPIMEELLHFHDHTLMIVFLISSLVLYIITLMLTTKLTHTSTMDAQEVETVWTILPAIILILIALPSLRILYMMDEINNPSLTVKTMGHQWYWSYEYTDYEDLNFDSYMIPTQELKPGELRLLEVDNRVVLPMEMTVRMLISSEDVLHSWAVPSLGLKTDAIPGRLNQTTLMAMRPGLYYGQCSEICGSNHSFMPIVLEMVPLSYFETWSAVMV.

The Mitochondrial intermembrane portion of the chain corresponds to 1 to 14; sequence MAYPFQLGLQDATS. A helical transmembrane segment spans residues 15–45; it reads PIMEELLHFHDHTLMIVFLISSLVLYIITLM. The Mitochondrial matrix segment spans residues 46 to 59; it reads LTTKLTHTSTMDAQ. Residues 60-87 traverse the membrane as a helical segment; the sequence is EVETVWTILPAIILILIALPSLRILYMM. Residues 88–227 are Mitochondrial intermembrane-facing; sequence DEINNPSLTV…YFETWSAVMV (140 aa). 6 residues coordinate Cu cation: H161, C196, E198, C200, H204, and M207. E198 serves as a coordination point for Mg(2+). At Y218 the chain carries Phosphotyrosine.

Belongs to the cytochrome c oxidase subunit 2 family. In terms of assembly, component of the cytochrome c oxidase (complex IV, CIV), a multisubunit enzyme composed of 14 subunits. The complex is composed of a catalytic core of 3 subunits MT-CO1, MT-CO2 and MT-CO3, encoded in the mitochondrial DNA, and 11 supernumerary subunits COX4I, COX5A, COX5B, COX6A, COX6B, COX6C, COX7A, COX7B, COX7C, COX8 and NDUFA4, which are encoded in the nuclear genome. The complex exists as a monomer or a dimer and forms supercomplexes (SCs) in the inner mitochondrial membrane with NADH-ubiquinone oxidoreductase (complex I, CI) and ubiquinol-cytochrome c oxidoreductase (cytochrome b-c1 complex, complex III, CIII), resulting in different assemblies (supercomplex SCI(1)III(2)IV(1) and megacomplex MCI(2)III(2)IV(2)). Found in a complex with TMEM177, COA6, COX18, COX20, SCO1 and SCO2. Interacts with TMEM177 in a COX20-dependent manner. Interacts with COX20. Interacts with COX16. Cu cation is required as a cofactor.

The protein localises to the mitochondrion inner membrane. It catalyses the reaction 4 Fe(II)-[cytochrome c] + O2 + 8 H(+)(in) = 4 Fe(III)-[cytochrome c] + 2 H2O + 4 H(+)(out). Its function is as follows. Component of the cytochrome c oxidase, the last enzyme in the mitochondrial electron transport chain which drives oxidative phosphorylation. The respiratory chain contains 3 multisubunit complexes succinate dehydrogenase (complex II, CII), ubiquinol-cytochrome c oxidoreductase (cytochrome b-c1 complex, complex III, CIII) and cytochrome c oxidase (complex IV, CIV), that cooperate to transfer electrons derived from NADH and succinate to molecular oxygen, creating an electrochemical gradient over the inner membrane that drives transmembrane transport and the ATP synthase. Cytochrome c oxidase is the component of the respiratory chain that catalyzes the reduction of oxygen to water. Electrons originating from reduced cytochrome c in the intermembrane space (IMS) are transferred via the dinuclear copper A center (CU(A)) of subunit 2 and heme A of subunit 1 to the active site in subunit 1, a binuclear center (BNC) formed by heme A3 and copper B (CU(B)). The BNC reduces molecular oxygen to 2 water molecules using 4 electrons from cytochrome c in the IMS and 4 protons from the mitochondrial matrix. This Vulpes vulpes (Red fox) protein is Cytochrome c oxidase subunit 2 (MT-CO2).